A 388-amino-acid polypeptide reads, in one-letter code: S-adenosylmethionine synthase (388 aa).

H16 is a binding site for ATP. A Mg(2+)-binding site is contributed by D18. E44 provides a ligand contact to K(+). Positions 57 and 100 each coordinate L-methionine. Residues 100 to 110 (QSPEIAQGVDR) are flexible loop. ATP-binding positions include 165-167 (DAK), 231-232 (KF), D240, 246-247 (RK), A263, and K267. L-methionine is bound at residue D240. Residue K271 coordinates L-methionine.

Belongs to the AdoMet synthase family. As to quaternary structure, homotetramer; dimer of dimers. Mg(2+) is required as a cofactor. Requires K(+) as cofactor.

Its subcellular location is the cytoplasm. The catalysed reaction is L-methionine + ATP + H2O = S-adenosyl-L-methionine + phosphate + diphosphate. It functions in the pathway amino-acid biosynthesis; S-adenosyl-L-methionine biosynthesis; S-adenosyl-L-methionine from L-methionine: step 1/1. Its function is as follows. Catalyzes the formation of S-adenosylmethionine (AdoMet) from methionine and ATP. The overall synthetic reaction is composed of two sequential steps, AdoMet formation and the subsequent tripolyphosphate hydrolysis which occurs prior to release of AdoMet from the enzyme. The protein is S-adenosylmethionine synthase of Psychrobacter sp. (strain PRwf-1).